The chain runs to 132 residues: Small ribosomal subunit protein uS11 (132 aa).

Positions 1 to 24 are disordered; it reads MAAQKQAARKPRRRDRKSVPVGQA. Positions 7–16 are enriched in basic residues; it reads AARKPRRRDR.

This sequence belongs to the universal ribosomal protein uS11 family. Part of the 30S ribosomal subunit. Interacts with proteins S7 and S18. Binds to IF-3.

In terms of biological role, located on the platform of the 30S subunit, it bridges several disparate RNA helices of the 16S rRNA. Forms part of the Shine-Dalgarno cleft in the 70S ribosome. The sequence is that of Small ribosomal subunit protein uS11 from Bifidobacterium adolescentis (strain ATCC 15703 / DSM 20083 / NCTC 11814 / E194a).